The sequence spans 1162 residues: DNA-directed RNA polymerase subunit beta (1162 aa).

Belongs to the RNA polymerase beta chain family. As to quaternary structure, the RNAP catalytic core consists of 2 alpha, 1 beta, 1 beta' and 1 omega subunit. When a sigma factor is associated with the core the holoenzyme is formed, which can initiate transcription.

It catalyses the reaction RNA(n) + a ribonucleoside 5'-triphosphate = RNA(n+1) + diphosphate. Functionally, DNA-dependent RNA polymerase catalyzes the transcription of DNA into RNA using the four ribonucleoside triphosphates as substrates. The polypeptide is DNA-directed RNA polymerase subunit beta (Clavibacter michiganensis subsp. michiganensis (strain NCPPB 382)).